The following is a 511-amino-acid chain: Xylose import ATP-binding protein XylG (511 aa).

ABC transporter domains lie at 6–244 and 261–506; these read LEMR…VGRE and FEAR…IGKP.

The protein belongs to the ABC transporter superfamily. Xylose importer (TC 3.A.1.2.4) family. The complex is composed of two ATP-binding proteins (XylG), two transmembrane proteins (XylH) and a solute-binding protein (XylF).

Its subcellular location is the cell inner membrane. It carries out the reaction D-xylose(out) + ATP + H2O = D-xylose(in) + ADP + phosphate + H(+). Functionally, part of the ABC transporter complex XylFGH involved in xylose import. Responsible for energy coupling to the transport system. This Brucella melitensis biotype 1 (strain ATCC 23456 / CCUG 17765 / NCTC 10094 / 16M) protein is Xylose import ATP-binding protein XylG.